Reading from the N-terminus, the 251-residue chain is MLEIHQFPCLSDNYGFLLHDPDSGETAAIDTPDGKEYLKQAKAKGWTITHIWNTHWHPDHAGGNKDIVEATGAKVIAPQEVEKLSGIDRVVGHGDTVDIGDFTADVIDVSGHTNGHIAYHLPEAGIAFVGDSVFALGCGRMFEGEPKQFWDSLSRIKALPPETMLYCAHEYTAANARFAVHADPENDALVAYVEEITAKRERDEPTVPTQLKRELATNPFLRADDPALVAKWGGDAPHETFAALRAGKDNF.

His55, His57, Asp59, His60, His112, Asp131, and His169 together coordinate Zn(2+).

It belongs to the metallo-beta-lactamase superfamily. Glyoxalase II family. Monomer. The cofactor is Zn(2+).

It carries out the reaction an S-(2-hydroxyacyl)glutathione + H2O = a 2-hydroxy carboxylate + glutathione + H(+). Its pathway is secondary metabolite metabolism; methylglyoxal degradation; (R)-lactate from methylglyoxal: step 2/2. Functionally, thiolesterase that catalyzes the hydrolysis of S-D-lactoyl-glutathione to form glutathione and D-lactic acid. This Erythrobacter litoralis (strain HTCC2594) protein is Hydroxyacylglutathione hydrolase.